A 343-amino-acid polypeptide reads, in one-letter code: MRN complex-interacting protein (343 aa).

A disordered region spans residues 75–104 (EETVSASEEENVGHQQAGNVKQQEKSQPSE). Residues 87 to 104 (GHQQAGNVKQQEKSQPSE) are compositionally biased toward polar residues. Residues Ser-100 and Ser-115 each carry the phosphoserine modification. Disordered stretches follow at residues 128–178 (SKQP…WGPQ), 193–212 (SPCLQENSADCSAGELRGPG), and 230–324 (AQFV…AQNP). The Nuclear localization signal (NLS) signature appears at 148–151 (RKRK). Residues 193–202 (SPCLQENSAD) show a composition bias toward polar residues. Residues 213–237 (KELWSPIQQVTATSSKWAQFVLPPR) are necessary for the association with the MRN complex. The span at 240–255 (SHVDSEQPRSLQRDPR) shows a compositional bias: basic and acidic residues.

This sequence belongs to the MRNIP family. As to quaternary structure, associates with the MRE11-RAD50-NBN (MRN) damage-sensing complex; this association is constitutive. Interacts with MRE11. Interacts with NBN. Interacts with RAD50. Phosphorylated; phosphorylation is constitutive and occurs in the absence of any DNA-damaging stimulus. Phosphorylation on Ser-115 is necessary for its nuclear retention.

It localises to the nucleus. Its subcellular location is the nucleoplasm. Functionally, plays a role in the cellular response to DNA damage and the maintenance of genome stability through its association with the MRN damage-sensing complex. Promotes chromatin loading and activity of the MRN complex to facilitate subsequent ATM-mediated DNA damage response signaling and DNA repair. The polypeptide is MRN complex-interacting protein (Homo sapiens (Human)).